Reading from the N-terminus, the 181-residue chain is ATP-dependent protease subunit HslV (181 aa).

T7 is an active-site residue. G166, C169, and T172 together coordinate Na(+).

It belongs to the peptidase T1B family. HslV subfamily. As to quaternary structure, a double ring-shaped homohexamer of HslV is capped on each side by a ring-shaped HslU homohexamer. The assembly of the HslU/HslV complex is dependent on binding of ATP.

It is found in the cytoplasm. It catalyses the reaction ATP-dependent cleavage of peptide bonds with broad specificity.. Its activity is regulated as follows. Allosterically activated by HslU binding. In terms of biological role, protease subunit of a proteasome-like degradation complex believed to be a general protein degrading machinery. The protein is ATP-dependent protease subunit HslV of Variovorax paradoxus (strain S110).